The chain runs to 447 residues: Dual specificity protein phosphatase CDC14C (447 aa).

The a stretch occupies residues 14–168 (PQDDVYVDIT…AMQYGFLNFN (155 aa)). The segment at 169–182 (SFNLDEYEHYEKAE) is linker. A b region spans residues 183-349 (NGDLNWIIPD…EGDYFRQRLK (167 aa)). A Tyrosine-protein phosphatase domain is found at 184–344 (GDLNWIIPDR…TSLWLEGDYF (161 aa)). The active-site Phosphocysteine intermediate is cysteine 284. Residues 426–446 (FTLCSVVIWWIVCDYILPILL) traverse the membrane as a helical segment.

It belongs to the protein-tyrosine phosphatase family. Non-receptor class CDC14 subfamily.

Its subcellular location is the endoplasmic reticulum membrane. It carries out the reaction O-phospho-L-tyrosyl-[protein] + H2O = L-tyrosyl-[protein] + phosphate. The enzyme catalyses O-phospho-L-seryl-[protein] + H2O = L-seryl-[protein] + phosphate. It catalyses the reaction O-phospho-L-threonyl-[protein] + H2O = L-threonyl-[protein] + phosphate. Its function is as follows. Dual-specificity phosphatase. Preferentially dephosphorylates proteins modified by proline-directed kinases. This chain is Dual specificity protein phosphatase CDC14C, found in Homo sapiens (Human).